A 313-amino-acid polypeptide reads, in one-letter code: Ribosomal RNA small subunit methyltransferase H (313 aa).

S-adenosyl-L-methionine is bound by residues 33-35 (AGH), Asp-53, Phe-82, Asp-103, and Gln-110.

Belongs to the methyltransferase superfamily. RsmH family.

The protein resides in the cytoplasm. The enzyme catalyses cytidine(1402) in 16S rRNA + S-adenosyl-L-methionine = N(4)-methylcytidine(1402) in 16S rRNA + S-adenosyl-L-homocysteine + H(+). Specifically methylates the N4 position of cytidine in position 1402 (C1402) of 16S rRNA. This Acetivibrio thermocellus (strain ATCC 27405 / DSM 1237 / JCM 9322 / NBRC 103400 / NCIMB 10682 / NRRL B-4536 / VPI 7372) (Clostridium thermocellum) protein is Ribosomal RNA small subunit methyltransferase H.